A 532-amino-acid polypeptide reads, in one-letter code: Flavin-containing monooxygenase 1 (532 aa).

N-acetylalanine is present on A2. Residues 2–510 lie on the Lumenal side of the membrane; that stretch reads AKRVAIVGAG…TRIVKESPSP (509 aa). FAD is bound by residues 9-13, E32, 40-41, and 61-62; these read GAGVS, LW, and NS. Residue 60–61 participates in NADP(+) binding; it reads SN. N120 carries an N-linked (GlcNAc...) (high mannose) asparagine glycan. 195 to 198 lines the NADP(+) pocket; sequence SGTD. The helical transmembrane segment at 511–531 threads the bilayer; the sequence is FASLLKLFSFLALLVAIFQIF. L532 is a topological domain (cytoplasmic).

Belongs to the FMO family. FAD is required as a cofactor. In terms of tissue distribution, liver.

The protein resides in the endoplasmic reticulum membrane. The enzyme catalyses hypotaurine + NADPH + O2 + H(+) = taurine + NADP(+) + H2O. The catalysed reaction is hypotaurine + NADH + O2 + H(+) = taurine + NAD(+) + H2O. It carries out the reaction trimethylamine + NADPH + O2 = trimethylamine N-oxide + NADP(+) + H2O. It catalyses the reaction N,N-dimethylaniline + NADPH + O2 + H(+) = N,N-dimethylaniline N-oxide + NADP(+) + H2O. Functionally, broad spectrum monooxygenase that catalyzes the oxygenation of a wide variety of nitrogen- and sulfur-containing compounds including xenobiotics. Catalyzes the S-oxygenation of hypotaurine to produce taurine, an organic osmolyte involved in cell volume regulation as well as a variety of cytoprotective and developmental processes. In vitro, catalyzes the N-oxygenation of trimethylamine (TMA) to produce trimethylamine N-oxide (TMAO) and could therefore participate to the detoxification of this compound that is generated by the action of gut microbiota from dietary precursors such as choline, choline containing compounds, betaine or L-carnitine. The sequence is that of Flavin-containing monooxygenase 1 (FMO1) from Sus scrofa (Pig).